Consider the following 82-residue polypeptide: ATP synthase subunit c, chloroplastic (82 aa).

The next 2 membrane-spanning stretches (helical) occupy residues 4–24 (IISA…AIGP) and 57–77 (LAFM…LLFA).

This sequence belongs to the ATPase C chain family. F-type ATPases have 2 components, F(1) - the catalytic core - and F(0) - the membrane proton channel. F(1) has five subunits: alpha(3), beta(3), gamma(1), delta(1), epsilon(1). F(0) has four main subunits: a(1), b(1), b'(1) and c(10-14). The alpha and beta chains form an alternating ring which encloses part of the gamma chain. F(1) is attached to F(0) by a central stalk formed by the gamma and epsilon chains, while a peripheral stalk is formed by the delta, b and b' chains.

The protein resides in the plastid. The protein localises to the chloroplast thylakoid membrane. Functionally, f(1)F(0) ATP synthase produces ATP from ADP in the presence of a proton or sodium gradient. F-type ATPases consist of two structural domains, F(1) containing the extramembraneous catalytic core and F(0) containing the membrane proton channel, linked together by a central stalk and a peripheral stalk. During catalysis, ATP synthesis in the catalytic domain of F(1) is coupled via a rotary mechanism of the central stalk subunits to proton translocation. Key component of the F(0) channel; it plays a direct role in translocation across the membrane. A homomeric c-ring of between 10-14 subunits forms the central stalk rotor element with the F(1) delta and epsilon subunits. This Heterosigma akashiwo (strain NIES-293 / 8280G21-1) protein is ATP synthase subunit c, chloroplastic.